A 596-amino-acid chain; its full sequence is Myosin light chain kinase 2, skeletal/cardiac muscle (596 aa).

The tract at residues 1–224 is disordered; the sequence is MATENGAVEL…AGQAKMQGDT (224 aa). Residue A2 is modified to N-acetylalanine. Residues 40–63 are compositionally biased toward basic and acidic residues; sequence DPKKAPDPPTLKKDAKAPASEKGD. Residues 88-104 show a composition bias toward low complexity; it reads EGSAGPPAALPQQTATP. S143, S149, and S151 each carry phosphoserine. Residues 189-209 are compositionally biased toward basic and acidic residues; it reads RPAKAEEGKNILAESQKEVGE. A Protein kinase domain is found at 285-540; that stretch reads MNSKEALGGG…AAQCLAHPWL (256 aa). ATP is bound by residues 291–299 and K314; that span reads LGGGKFGAV. D406 (proton acceptor) is an active-site residue. T445 is modified (phosphothreonine). The tract at residues 574–586 is calmodulin-binding; it reads IAVSAANRFKKIS.

The protein belongs to the protein kinase superfamily. CAMK Ser/Thr protein kinase family. May interact with centrin. In terms of tissue distribution, heart and skeletal muscles. Increased expression in the apical tissue compared to the interventricular septal tissue.

The protein resides in the cytoplasm. It carries out the reaction L-seryl-[myosin light chain] + ATP = O-phospho-L-seryl-[myosin light chain] + ADP + H(+). It catalyses the reaction L-threonyl-[myosin light chain] + ATP = O-phospho-L-threonyl-[myosin light chain] + ADP + H(+). Implicated in the level of global muscle contraction and cardiac function. Phosphorylates a specific serine in the N-terminus of a myosin light chain. This Homo sapiens (Human) protein is Myosin light chain kinase 2, skeletal/cardiac muscle (MYLK2).